The primary structure comprises 203 residues: CASP-like protein 2U5 (203 aa).

The Cytoplasmic segment spans residues 1-31; it reads MSEHRIPVAADKQISPPISAGEQKGCKGLKR. A helical transmembrane segment spans residues 32–52; the sequence is TDLMLRFAAFVCCAVTMVVLI. Residues 53–84 lie on the Extracellular side of the membrane; that stretch reads TDKQTSAIQVPGFNNLTITKTVSFDLAKAFVY. A glycan (N-linked (GlcNAc...) asparagine) is linked at N67. A helical transmembrane segment spans residues 85–105; that stretch reads LVSAAGIGAGYTLLVLVLSII. The Cytoplasmic portion of the chain corresponds to 106–111; sequence SAERSK. The helical transmembrane segment at 112-132 threads the bilayer; that stretch reads AIAWFIFVFDQLITYVLLAAA. Topologically, residues 133–164 are extracellular; sequence AASTEVAYMGAHAPPEASWLKVCSLFGRFCHQ. Residues 165–185 form a helical membrane-spanning segment; sequence LGASLVTSFISTVLFAFSAAI. The Cytoplasmic portion of the chain corresponds to 186 to 203; sequence SAYYLFSNTNVRPAYSKG.

Belongs to the Casparian strip membrane proteins (CASP) family. As to quaternary structure, homodimer and heterodimers.

It localises to the cell membrane. In Selaginella moellendorffii (Spikemoss), this protein is CASP-like protein 2U5.